The following is a 314-amino-acid chain: Pseudouridine-5'-phosphate glycosidase (314 aa).

The active-site Proton donor is the Glu30. Substrate-binding residues include Lys91 and Val111. Residue Asp143 coordinates Mn(2+). Residue Ser145 to Asp147 participates in substrate binding. Catalysis depends on Lys164, which acts as the Nucleophile.

This sequence belongs to the pseudouridine-5'-phosphate glycosidase family. As to quaternary structure, homotrimer. Mn(2+) is required as a cofactor.

It carries out the reaction D-ribose 5-phosphate + uracil = psi-UMP + H2O. Functionally, catalyzes the reversible cleavage of pseudouridine 5'-phosphate (PsiMP) to ribose 5-phosphate and uracil. Functions biologically in the cleavage direction, as part of a pseudouridine degradation pathway. The polypeptide is Pseudouridine-5'-phosphate glycosidase (Cupriavidus pinatubonensis (strain JMP 134 / LMG 1197) (Cupriavidus necator (strain JMP 134))).